Reading from the N-terminus, the 76-residue chain is MKILDRINELANKEKVQPLTVAEKQEQHALRQDYLSMIRGQVLTTFSTIKVVDPIGQDVTPDKVYDLRQQYGYIQN.

Belongs to the UPF0291 family.

It is found in the cytoplasm. In Staphylococcus aureus (strain MW2), this protein is UPF0291 protein MW2494.